A 634-amino-acid polypeptide reads, in one-letter code: Chaperone protein HtpG (634 aa).

The segment at 1-342 is a; substrate-binding; the sequence is MTVETDKQTL…SSDLSLNVSR (342 aa). The interval 343 to 559 is b; it reads EILQSGPVVD…QGDLGLQMRQ (217 aa). The interval 560–634 is c; the sequence is LLEASGQAVP…LNKLLLELSV (75 aa).

Belongs to the heat shock protein 90 family. As to quaternary structure, homodimer.

The protein localises to the cytoplasm. In terms of biological role, molecular chaperone. Has ATPase activity. This chain is Chaperone protein HtpG, found in Xanthomonas euvesicatoria pv. vesicatoria (strain 85-10) (Xanthomonas campestris pv. vesicatoria).